A 179-amino-acid polypeptide reads, in one-letter code: Large ribosomal subunit protein uL5 (179 aa).

Belongs to the universal ribosomal protein uL5 family. In terms of assembly, part of the 50S ribosomal subunit; part of the 5S rRNA/L5/L18/L25 subcomplex. Contacts the 5S rRNA and the P site tRNA. Forms a bridge to the 30S subunit in the 70S ribosome.

Its function is as follows. This is one of the proteins that bind and probably mediate the attachment of the 5S RNA into the large ribosomal subunit, where it forms part of the central protuberance. In the 70S ribosome it contacts protein S13 of the 30S subunit (bridge B1b), connecting the 2 subunits; this bridge is implicated in subunit movement. Contacts the P site tRNA; the 5S rRNA and some of its associated proteins might help stabilize positioning of ribosome-bound tRNAs. The chain is Large ribosomal subunit protein uL5 from Cronobacter sakazakii (strain ATCC BAA-894) (Enterobacter sakazakii).